The chain runs to 601 residues: MQQGDYNSYYHHQYSQFQNPTPNPNPNPNPSPPAPATVAGPTDLTRNTYASAPPFTGGYGSADYSNYSQNYTPYGQNSEHVPPSAPSFTSPSQPPPSPPATSLNPNSYSTFNQPPPPPTIHPQPLSSYGSFDSTAPYQQPTSQHMYYSPYDQHQTSGYSSAPPPSSAPAPNPNPAPYSSSLYSAPPYSSGGSSIPPSYEKPSVKFDQSGYDGYNRSRSDLGSDLYGKRSDSGEYPAFEDSYGDGVYAYQGGKVEPYGSRGTAPKSSNSTLFDDYGRSISFSSSGRDSSVSSNSAKIVRAVPKADVQEDSTGGVQKFRVKLLAETYGQTTTDVLCQIGLDGLRMLDPSTSRTLRIYPLENITRCEKLDSSILAFWSKTPVDIEAKRIRLQSNSYTTNTLLDTVTAAMFQAKEIGGSSRPPTSGKLIEQTAEKKKGLGDWMNIIKPVNEEKDHWVPDEAVSKCTSCGSDFGAFIRRHHCRNCGDVFCDKCTQGRIALTAEDNAPQVRVCDRCMAEVSQRLSNAKETTGRNVSLQSHEDLARKLQEEMERNRKSSSGLREGSGRRMKEVACPTCTVHLQVQVPVSGSETIECGVCQNPFLVSAH.

Residues 1–240 form a disordered region; the sequence is MQQGDYNSYY…SGEYPAFEDS (240 aa). Residues 21 to 35 show a composition bias toward pro residues; that stretch reads TPNPNPNPNPSPPAP. Polar residues-rich tracts occupy residues 63 to 79 and 125 to 155; these read DYSN…QNSE and LSSY…QHQT. Residues 161-175 are compositionally biased toward pro residues; the sequence is APPPSSAPAPNPNPA. The segment covering 176-197 has biased composition (low complexity); that stretch reads PYSSSLYSAPPYSSGGSSIPPS. The span at 214 to 231 shows a compositional bias: basic and acidic residues; the sequence is NRSRSDLGSDLYGKRSDS. Ser218 carries the phosphoserine modification. The nuclear export signal stretch occupies residues 338 to 344; sequence LDGLRML. Residues 455–515 form an FYVE-type zinc finger; sequence DEAVSKCTSC…VCDRCMAEVS (61 aa). 8 residues coordinate Zn(2+): Cys461, Cys464, Cys477, Cys480, Cys485, Cys488, Cys507, and Cys510. Positions 527–552 form a coiled coil; it reads RNVSLQSHEDLARKLQEEMERNRKSS. A phosphoserine mark is found at Ser530 and Ser533. Positions 542–561 are disordered; that stretch reads QEEMERNRKSSSGLREGSGR.

In terms of assembly, part of the ESCRT-I complex. Interacts with VPS23A and VPS23B, but not with VPS28 or VPS37. Interacts with IRT1. Interacts with SH3P2. Interacts with SH3P3, but not with SH3P1. Interacts (via N-terminus) with PYL4 and PYR3. Interacts (via C-terminus) with SNRK2D/SNRK2.2, SNRK2I/SNRK2.3, ABF4 and ABI5. Interacts with SINAT1, SINAT2, SINAT3 and SINAT4. Interacts with SINAT5. Component of a phosphoinositide 3-kinase (PI3K) complex containing ATG6, SH3P2 and FREE1. In terms of processing, phosphorylated at Ser-530 and Ser-533 by SNRK2D/SNRK2.2 and SNRK2I/SNRK2.3 in response to abscisic acid (ABA). Phosphorylation is necessary for ABA-induced FREE1 nuclear import. Ubiquitinated by SINAT1, SINAT2, SINAT3 and SINAT4 for subsequent proteasomal degradation. In terms of tissue distribution, ubiquitous. Lowest expression in mature seeds.

The protein localises to the cytoplasm. It is found in the prevacuolar compartment membrane. Its subcellular location is the late endosome. The protein resides in the endosome. It localises to the multivesicular body. The protein localises to the nucleus. Endosomal sorting complex required for transport (ESCRT) component regulating multivesicular body (MVB) protein sorting and plant growth. Required for the formation of intra-luminal vesicles (ILVs)in MVBs. Binds to phosphatidylinositol-3-phosphate (PI3P) and ubiquitin. Controls IRT1 recycling to the plasma membrane and impacts the polar delivery of this transporter to the outer plasma membrane domain. Regulates ubiquitin-dependent membrane protein degradation, vacuolar transport, autophagy, and vacuole biogenesis. ESCRT component that binds ubiquitin and regulates vacuolar sorting of proteins. Attenuates abscisic acid (ABA) signaling through RSL1-triggered degradation of the ABA receptors PYR1 and PYL4. Interacts with PYL4 and PYR1, and delivers the ubiquitinated ABA receptors as cargo to the vacuolar degradation pathway. In response to ABA, is phosphorylated by SnRK2 kinases which mediate FREE1 nuclear import. In the nucleus, interacts with the ABA-responsive transcription factors ABF4 and ABI5 to reduce their ability to bind to their cis-regulatory sequences of downstream genes, thus leading to transcriptional inhibition of ABA signaling pathway. Negatively regulates salt stress tolerance via a negative feedback loop involving ABA signaling pathway. In Arabidopsis thaliana (Mouse-ear cress), this protein is Protein FREE1.